The following is a 377-amino-acid chain: Diels-Alderase fsa2 (377 aa).

This sequence belongs to the Diels-Alderase family.

It catalyses the reaction (5S)-3-[(2E,6R,8E,10E,12E)-2,6-dimethyltetradeca-2,8,10,12-tetraenoyl]-5-(hydroxymethyl)pyrrolidine-2,4-dione = trichosetin. The protein operates within mycotoxin biosynthesis. Its function is as follows. Diels-Alderase; part of the gene cluster that mediates the biosynthesis of equisetin, a trans-fused decalin-containing tetramic acid with antimicrobial activity. The PKS module of eqxS together with the enoylreductase eqxC catalyze the formation of the polyketide unit which is then conjugated to L-serine by the condensation domain of the eqxS NRPS module. Activity of the Dieckmann cyclase domain (RED) results in release of the Dieckmann product intermediate. Diels-Alderase eqx3 is involved in endo-selective Diels-Alder cycloaddition to form the decalin ring, leading to the production of N-desmethylequisetin also called trichosetin. Subsequent N-methylation is carried out by eqxD to give equisetin. The sequence is that of Diels-Alderase fsa2 from Fusarium heterosporum.